The sequence spans 626 residues: Endoglucanase 19 (626 aa).

A signal peptide spans 1–23 (MGSRTTISILVVLLLGLVQLAIS). The active-site Nucleophile is the aspartate 79. Residues histidine 412, aspartate 464, and glutamate 473 contribute to the active site. The interval 515–536 (APVPQRKPTKPPAASSPSPITI) is disordered. Residues 526-536 (PAASSPSPITI) show a composition bias toward low complexity. Asparagine 560 and asparagine 622 each carry an N-linked (GlcNAc...) asparagine glycan.

It belongs to the glycosyl hydrolase 9 (cellulase E) family.

It is found in the secreted. The enzyme catalyses Endohydrolysis of (1-&gt;4)-beta-D-glucosidic linkages in cellulose, lichenin and cereal beta-D-glucans.. This chain is Endoglucanase 19, found in Arabidopsis thaliana (Mouse-ear cress).